The following is a 93-amino-acid chain: Small ribosomal subunit protein uS19 (93 aa).

Belongs to the universal ribosomal protein uS19 family.

Protein S19 forms a complex with S13 that binds strongly to the 16S ribosomal RNA. This Parafrankia sp. (strain EAN1pec) protein is Small ribosomal subunit protein uS19.